Reading from the N-terminus, the 415-residue chain is Gamma-glutamyl phosphate reductase (415 aa).

The protein belongs to the gamma-glutamyl phosphate reductase family.

It localises to the cytoplasm. The catalysed reaction is L-glutamate 5-semialdehyde + phosphate + NADP(+) = L-glutamyl 5-phosphate + NADPH + H(+). Its pathway is amino-acid biosynthesis; L-proline biosynthesis; L-glutamate 5-semialdehyde from L-glutamate: step 2/2. In terms of biological role, catalyzes the NADPH-dependent reduction of L-glutamate 5-phosphate into L-glutamate 5-semialdehyde and phosphate. The product spontaneously undergoes cyclization to form 1-pyrroline-5-carboxylate. The sequence is that of Gamma-glutamyl phosphate reductase from Oceanobacillus iheyensis (strain DSM 14371 / CIP 107618 / JCM 11309 / KCTC 3954 / HTE831).